The following is an 826-amino-acid chain: Ferric-pyoverdine M114 receptor PbuA (826 aa).

The N-terminal stretch at 1–44 (MSASRFMLRPLTRALLMHGATRTRLAGTGLGLALTLTAAPYVQA) is a signal peptide. Positions 110 to 119 (DGNTVTVLGP) match the TonB box motif. The region spanning 160–271 (SLKETPQSVT…TAGGVNFVRK (112 aa)) is the TBDR plug domain. Residues 276–826 (TAHTQLSLSA…NFVMSVKADF (551 aa)) form the TBDR beta-barrel domain. Residues 809–826 (GNFYGDPRNFVMSVKADF) carry the TonB C-terminal box motif.

This sequence belongs to the TonB-dependent receptor family.

The protein resides in the cell outer membrane. Specific receptor for the siderophore ferric pyoverdine (pseudobactin) M114. This Pseudomonas sp. (strain M114) protein is Ferric-pyoverdine M114 receptor PbuA (pbuA).